Consider the following 208-residue polypeptide: Methenyltetrahydrofolate cyclohydrolase (208 aa).

Residues 25 to 46 (GAAAISGAMGAALVSMVCNLTI) traverse the membrane as a helical segment.

It belongs to the cyclodeaminase/cyclohydrolase family. Homodimer.

The protein resides in the membrane. The enzyme catalyses (6R)-5,10-methenyltetrahydrofolate + H2O = (6R)-10-formyltetrahydrofolate + H(+). It participates in one-carbon metabolism; formaldehyde assimilation via serine pathway. Its function is as follows. Required for both C1 and C2 metabolism. This is Methenyltetrahydrofolate cyclohydrolase (fchA) from Methylorubrum extorquens (strain ATCC 14718 / DSM 1338 / JCM 2805 / NCIMB 9133 / AM1) (Methylobacterium extorquens).